Reading from the N-terminus, the 360-residue chain is Protein Wnt-2 (360 aa).

The N-terminal stretch at 1–26 is a signal peptide; it reads MNAPLGGIWLWLPLLLTWLTPEVSSS. Intrachain disulfides connect Cys-76–Cys-87, Cys-127–Cys-135, Cys-137–Cys-157, Cys-206–Cys-220, Cys-208–Cys-215, Cys-278–Cys-309, Cys-294–Cys-304, Cys-308–Cys-348, Cys-324–Cys-339, Cys-326–Cys-336, and Cys-331–Cys-332. The O-palmitoleoyl serine; by PORCN moiety is linked to residue Ser-212. A glycan (N-linked (GlcNAc...) asparagine) is linked at Asn-295.

It belongs to the Wnt family. In terms of processing, palmitoleoylation is required for efficient binding to frizzled receptors. Depalmitoleoylation leads to Wnt signaling pathway inhibition.

Its subcellular location is the secreted. It is found in the extracellular space. The protein resides in the extracellular matrix. Ligand for members of the frizzled family of seven transmembrane receptors. Probable developmental protein. May be a signaling molecule which affects the development of discrete regions of tissues. Is likely to signal over only few cell diameters. The sequence is that of Protein Wnt-2 (WNT2) from Eulemur macaco macaco (Black lemur).